A 167-amino-acid chain; its full sequence is Large ribosomal subunit protein uL10 (167 aa).

It belongs to the universal ribosomal protein uL10 family. Part of the ribosomal stalk of the 50S ribosomal subunit. The N-terminus interacts with L11 and the large rRNA to form the base of the stalk. The C-terminus forms an elongated spine to which L12 dimers bind in a sequential fashion forming a multimeric L10(L12)X complex.

Its function is as follows. Forms part of the ribosomal stalk, playing a central role in the interaction of the ribosome with GTP-bound translation factors. This Yersinia enterocolitica serotype O:8 / biotype 1B (strain NCTC 13174 / 8081) protein is Large ribosomal subunit protein uL10.